Consider the following 257-residue polypeptide: Large ribosomal subunit protein uL2 (257 aa).

Residues valine 207–asparagine 257 are disordered.

This sequence belongs to the universal ribosomal protein uL2 family. In terms of assembly, component of the large ribosomal subunit.

The protein localises to the cytoplasm. In terms of biological role, component of the large ribosomal subunit. The ribosome is a large ribonucleoprotein complex responsible for the synthesis of proteins in the cell. The polypeptide is Large ribosomal subunit protein uL2 (RPL8) (Entamoeba histolytica (strain ATCC 30459 / HM-1:IMSS / ABRM)).